A 401-amino-acid polypeptide reads, in one-letter code: Renin-2 (401 aa).

The signal sequence occupies residues 1–25; it reads MDRRRMPLWALLLLWSPCTFSLPTG. Positions 26 to 63 are cleaved as a propeptide — activation peptide; that stretch reads TTFERIPLKKMPSVREILEERGVDMTRLSAEWDVFTKR. Residues 83–398 enclose the Peptidase A1 domain; it reads YYGEIGIGTP…DRHNNRIGFA (316 aa). The active site involves D101. Intrachain disulfides connect C114–C121 and C277–C281. The active site involves D286. Residues C320 and C357 are joined by a disulfide bond.

Belongs to the peptidase A1 family. Dimer of a heavy chain and a light chain joined by a disulfide bond. In terms of tissue distribution, submandibular gland.

It localises to the secreted. It catalyses the reaction Cleavage of Leu-|-Xaa bond in angiotensinogen to generate angiotensin I.. Its function is as follows. Renin is a highly specific endopeptidase, related to pepsin, whose only known function is to generate angiotensin I from angiotensinogen in the plasma, initiating a cascade of reactions that produce an elevation of blood pressure and increased sodium retention by the kidney. The chain is Renin-2 from Mus musculus (Mouse).